The sequence spans 740 residues: Eukaryotic translation initiation factor 3 subunit B (740 aa).

Residues 1–10 show a composition bias toward polar residues; that stretch reads MAPSFDTLSE. The segment at 1 to 20 is disordered; that stretch reads MAPSFDTLSEQDLHEEEEEE. An RRM domain is found at 40–126; that stretch reads TFVVIDGLPV…HTLLVNKLMD (87 aa). WD repeat units follow at residues 193–230, 232–289, 302–343, 455–496, 513–556, and 571–609; these read AHWT…KQKQ, PHPF…RSFV, EPKK…LLGK, SLKD…SFFA, IEKK…EKPE, and IEHY…HTFA. The tract at residues 695–721 is disordered; sequence DAYGLPEEADDPKLAKDAAATTQEQGE.

This sequence belongs to the eIF-3 subunit B family. In terms of assembly, component of the eukaryotic translation initiation factor 3 (eIF-3) complex.

Its subcellular location is the cytoplasm. Its function is as follows. RNA-binding component of the eukaryotic translation initiation factor 3 (eIF-3) complex, which is involved in protein synthesis of a specialized repertoire of mRNAs and, together with other initiation factors, stimulates binding of mRNA and methionyl-tRNAi to the 40S ribosome. The eIF-3 complex specifically targets and initiates translation of a subset of mRNAs involved in cell proliferation. This is Eukaryotic translation initiation factor 3 subunit B (prt1) from Neosartorya fischeri (strain ATCC 1020 / DSM 3700 / CBS 544.65 / FGSC A1164 / JCM 1740 / NRRL 181 / WB 181) (Aspergillus fischerianus).